Reading from the N-terminus, the 266-residue chain is Phosphate import ATP-binding protein PstB (266 aa).

One can recognise an ABC transporter domain in the interval 15–261 (VQKSVVNKLN…PKNKQTEDYI (247 aa)). Residue 50 to 57 (GPSGCGKS) coordinates ATP.

It belongs to the ABC transporter superfamily. Phosphate importer (TC 3.A.1.7) family. In terms of assembly, the complex is composed of two ATP-binding proteins (PstB), two transmembrane proteins (PstC and PstA) and a solute-binding protein (PstS).

It localises to the cell inner membrane. It carries out the reaction phosphate(out) + ATP + H2O = ADP + 2 phosphate(in) + H(+). In terms of biological role, part of the ABC transporter complex PstSACB involved in phosphate import. Responsible for energy coupling to the transport system. The polypeptide is Phosphate import ATP-binding protein PstB (Nitrosomonas europaea (strain ATCC 19718 / CIP 103999 / KCTC 2705 / NBRC 14298)).